A 447-amino-acid chain; its full sequence is Phosphoglucosamine mutase (447 aa).

The active-site Phosphoserine intermediate is Ser101. Positions 101, 242, 244, and 246 each coordinate Mg(2+). Ser101 is subject to Phosphoserine.

Belongs to the phosphohexose mutase family. Mg(2+) serves as cofactor. In terms of processing, activated by phosphorylation.

The enzyme catalyses alpha-D-glucosamine 1-phosphate = D-glucosamine 6-phosphate. Catalyzes the conversion of glucosamine-6-phosphate to glucosamine-1-phosphate. The chain is Phosphoglucosamine mutase from Bradyrhizobium diazoefficiens (strain JCM 10833 / BCRC 13528 / IAM 13628 / NBRC 14792 / USDA 110).